The sequence spans 156 residues: Small ribosomal subunit protein uS7 (156 aa).

It belongs to the universal ribosomal protein uS7 family. In terms of assembly, part of the 30S ribosomal subunit. Contacts proteins S9 and S11.

Functionally, one of the primary rRNA binding proteins, it binds directly to 16S rRNA where it nucleates assembly of the head domain of the 30S subunit. Is located at the subunit interface close to the decoding center, probably blocks exit of the E-site tRNA. This chain is Small ribosomal subunit protein uS7, found in Acidithiobacillus ferrooxidans (strain ATCC 53993 / BNL-5-31) (Leptospirillum ferrooxidans (ATCC 53993)).